Consider the following 561-residue polypeptide: Putative transport protein ASA_2308 (561 aa).

The next 5 helical transmembrane spans lie at 8-28 (LLHQSDSLLLFVVLAFGLLLG), 37-57 (IGNTIGVLFTALLFGQMGFEF), 66-86 (FMLFIFCVGIEAGPHFFSVFL), 90-110 (IHYITLTLVILLTALLLTVGL), and 161-181 (NMGIGYALTYLVGLVGLMLVV). RCK C-terminal domains lie at 206-291 (SDNE…NYRN) and 293-376 (KEVF…KIGF). Transmembrane regions (helical) follow at residues 386–406 (LVAFTTFFVLGLLIGSVSLVF), 409–429 (LEFGLGNAVGLLLAGILMGYL), 450–470 (LGLAVFMVSTGLKAGGGILDH), 476–496 (AVVLFSGMLVTTLPVLVGYLF), and 541–561 (TYAVANVMLTLAGSFIIGFWF).

It belongs to the AAE transporter (TC 2.A.81) family. YbjL subfamily.

It localises to the cell membrane. This chain is Putative transport protein ASA_2308, found in Aeromonas salmonicida (strain A449).